The primary structure comprises 357 residues: Anthranilate phosphoribosyltransferase (357 aa).

5-phospho-alpha-D-ribose 1-diphosphate contacts are provided by residues glycine 91, 94 to 95 (GD), threonine 99, 101 to 104 (NIST), 119 to 127 (KHGNRSVSS), and serine 131. Residue glycine 91 coordinates anthranilate. Mg(2+) is bound at residue serine 103. Asparagine 122 serves as a coordination point for anthranilate. Anthranilate is bound at residue arginine 177. 2 residues coordinate Mg(2+): aspartate 235 and glutamate 236.

Belongs to the anthranilate phosphoribosyltransferase family. In terms of assembly, homodimer. Mg(2+) is required as a cofactor.

It catalyses the reaction N-(5-phospho-beta-D-ribosyl)anthranilate + diphosphate = 5-phospho-alpha-D-ribose 1-diphosphate + anthranilate. It participates in amino-acid biosynthesis; L-tryptophan biosynthesis; L-tryptophan from chorismate: step 2/5. Functionally, catalyzes the transfer of the phosphoribosyl group of 5-phosphorylribose-1-pyrophosphate (PRPP) to anthranilate to yield N-(5'-phosphoribosyl)-anthranilate (PRA). The sequence is that of Anthranilate phosphoribosyltransferase from Shewanella baltica (strain OS185).